Reading from the N-terminus, the 435-residue chain is Type A flavoprotein fprA (435 aa).

Residues 48-228 are zinc metallo-hydrolase; the sequence is ANGTTYNAYA…PFRSFVAQAL (181 aa). Residues His98, Glu100, Asp102, His167, Asp186, and His243 each contribute to the Fe cation site. The Flavodoxin-like domain maps to 276-415; that stretch reads LLIFYVSAYG…EGRAFGRRLA (140 aa).

In the N-terminal section; belongs to the zinc metallo-hydrolase group 3 family. In terms of assembly, homodimer. FMN is required as a cofactor. Requires Fe cation as cofactor.

Low-potential electron donor to a number of redox enzymes. The sequence is that of Type A flavoprotein fprA (fprA) from Rhodobacter capsulatus (strain ATCC BAA-309 / NBRC 16581 / SB1003).